A 347-amino-acid polypeptide reads, in one-letter code: Zinc finger protein CONSTANS-LIKE 2 (347 aa).

Residues Cys-16, Cys-19, Cys-39, His-44, Cys-59, Cys-62, Cys-82, and His-87 each coordinate Zn(2+). The B box-type 1; atypical zinc-finger motif lies at 16–58 (CDTCRSAACTVYCEADSAYLCTTCDARVHAANRVASRHERVRV). The B box-type 2; atypical zinc finger occupies 59-101 (CQSCESAPAAFLCKADAASLCTACDAEIHSANPLARRHQRVPI). Residues 278 to 320 (REARVLRYREKKKTRKFDKTIRYASRKAYAEIRPRIKGRFAKR) enclose the CCT domain.

The protein belongs to the CONSTANS family. In terms of tissue distribution, highly expressed in leaves. Expressed at lower levels in stems, flowers and siliques. Not detected in roots.

It localises to the nucleus. Putative transcription factor. Does not affect flowering time. The protein is Zinc finger protein CONSTANS-LIKE 2 (COL2) of Arabidopsis thaliana (Mouse-ear cress).